Reading from the N-terminus, the 259-residue chain is Pycsar effector protein RsmPycTIR (259 aa).

Residue 1-120 (MVGGDEVIAN…RRVHEDFSGR (120 aa)) coordinates a nucleoside 3',5'-cyclic phosphate. Residues 126 to 229 (LATGISRRTS…AEFQYQISSS (104 aa)) form a TIR-like region. A run of 3 helical transmembrane segments spans residues 136–156 (GWNW…AIWY), 169–189 (VLLP…ADPV), and 234–254 (QATA…LFWI).

The protein resides in the cell inner membrane. It carries out the reaction NAD(+) + H2O = ADP-D-ribose + nicotinamide + H(+). In terms of biological role, pycsar (pyrimidine cyclase system for antiphage resistance) provides immunity against bacteriophage. The pyrimidine cyclase (PycC) synthesizes cyclic nucleotides in response to infection; these serve as specific second messenger signals. The signals activate the adjacent effector, leading to bacterial cell death and abortive phage infection. A clade B Pycsar system. The effector gene of a two-gene Pycsar system. Expression of this and adjacent uridylate cyclase RsmPycC (AC A0A1V0HUX5) probably confers resistance to bacteriophage. The genes are probably only expressed in response to bacteriophage infection. Probably only responds to cUMP (produced by its cognate NTP cyclase), it may act by degrading NAD(+) and/or by impairing membrane integrity. The chain is Pycsar effector protein RsmPycTIR from Rhodovulum sp. (strain MB263).